Reading from the N-terminus, the 67-residue chain is uncharacterized protein (67 aa).

2 helical membrane passes run 13–32 and 42–64; these read IACLRSLSIKILIICHGFIV and RLTNFFSIMILLTFSNFSRTLGL.

The protein localises to the membrane. This is an uncharacterized protein from Saccharomyces cerevisiae (strain ATCC 204508 / S288c) (Baker's yeast).